The primary structure comprises 416 residues: Nonsense-mediated decay protein 4 (416 aa).

Disordered stretches follow at residues 1-21 (MSLYPYNSDEDEARKNSNYHD), 195-218 (QHPIPQGESLESHNSFDETNYNNS), and 356-393 (DRPSKSKNKNKNKNTKKSTKPKQINGVVSDGCTGANGD). Basic and acidic residues predominate over residues 12-21 (EARKNSNYHD). A compositionally biased stretch (basic residues) spans 360-375 (KSKNKNKNKNTKKSTK).

It is found in the cytoplasm. Involved in nonsense-mediated decay of mRNAs containing premature stop codons. This is Nonsense-mediated decay protein 4 (NMD4) from Debaryomyces hansenii (strain ATCC 36239 / CBS 767 / BCRC 21394 / JCM 1990 / NBRC 0083 / IGC 2968) (Yeast).